The following is a 469-amino-acid chain: Glutamate--tRNA ligase 1 (469 aa).

Positions 10-20 (PSPTGYLHIGG) match the 'HIGH' region motif. Zn(2+)-binding residues include Cys-99, Cys-101, Cys-126, and Asp-128. A 'KMSKS' region motif is present at residues 237 to 241 (RLSKR). Lys-240 contributes to the ATP binding site.

Belongs to the class-I aminoacyl-tRNA synthetase family. Glutamate--tRNA ligase type 1 subfamily. Monomer. Zn(2+) is required as a cofactor.

The protein resides in the cytoplasm. The enzyme catalyses tRNA(Glu) + L-glutamate + ATP = L-glutamyl-tRNA(Glu) + AMP + diphosphate. Functionally, catalyzes the attachment of glutamate to tRNA(Glu) in a two-step reaction: glutamate is first activated by ATP to form Glu-AMP and then transferred to the acceptor end of tRNA(Glu). This Coxiella burnetii (strain CbuK_Q154) (Coxiella burnetii (strain Q154)) protein is Glutamate--tRNA ligase 1.